The primary structure comprises 146 residues: 16.0 kDa heat shock protein, peroxisomal (146 aa).

Residues 23–143 (WASASATAAM…RPRTRPIAVS (121 aa)) form the sHSP domain. A Microbody targeting signal motif is present at residues 144-146 (SKL).

It belongs to the small heat shock protein (HSP20) family. May form oligomeric structures.

The protein resides in the peroxisome. This Oryza sativa subsp. japonica (Rice) protein is 16.0 kDa heat shock protein, peroxisomal (HSP16.0).